Consider the following 1057-residue polypeptide: uncharacterized protein (1057 aa).

The protein belongs to the IIV-6 261R/396L/443R family.

This is an uncharacterized protein from Acheta domesticus (House cricket).